A 514-amino-acid polypeptide reads, in one-letter code: MIGRARPLMFLGTGSDVGKSVLAAAFCRILKQDGYSVAPFKAQNMALNSYITPEGGEMGRAQVVQAEAAGIEPHVDMNPVLLKPTSQMGSQVIVRGRAIGNYSAQEYYEYKKNLVEVVRESYERLAARYDVVVLEGAGSAVELNLKEHDLVNLAMAKMADAPCILVGDIDRGGIFAALLGSTMLMTPDERDRTIGFIVNKLRGDPRLFASGVDILESRSGLPVFGVVPHFDHIALPEEDSVALGRRARRVETRGSEDALMVGVVRLPYVSNYTDFDCLEHEPDVELLYFDRPEQVFGFDAVILPGSKNTIEDLAFLRKNGMAEAVVAFYKSGGTVVGLCGGYQMMGLRVSDPHGVESSIREIAGLGLLDMETEMFQDKVTSQVTALNIGGSGLEVSEDDALRGYEIHMGRSASMGGARPLFRIVSRDGLPVQVEDGLIQPGGRAWGTYIHGIFDNDGLRKAFLAGLKSRSGKTRVALSAGFSYQDWKNEQYDRLADHIRQHVDVKRIRRIIGLW.

The GATase cobBQ-type domain occupies 258 to 458 (ALMVGVVRLP…IHGIFDNDGL (201 aa)). The active-site Nucleophile is the C339. The active site involves H450.

Belongs to the CobB/CobQ family. CobQ subfamily.

It participates in cofactor biosynthesis; adenosylcobalamin biosynthesis. In terms of biological role, catalyzes amidations at positions B, D, E, and G on adenosylcobyrinic A,C-diamide. NH(2) groups are provided by glutamine, and one molecule of ATP is hydrogenolyzed for each amidation. The chain is Cobyric acid synthase from Syntrophobacter fumaroxidans (strain DSM 10017 / MPOB).